The sequence spans 273 residues: GDNF family receptor alpha-4 (273 aa).

The N-linked (GlcNAc...) asparagine glycan is linked to Asn-192. A lipid anchor (GPI-anchor amidated asparagine) is attached at Asn-250. Positions 251–273 (AGCCFLWVSSMSILTALALQALL) are cleaved as a propeptide — removed in mature form.

It belongs to the GDNFR family. Interacts with ARTN ligand and RET: forms a 2:2:2 ternary complex composed of ARTN ligand, GFRA3 and RET receptor. Interacts with SORL1. In terms of tissue distribution, weakly expressed in heart, brain and testis.

The protein localises to the cell membrane. The protein resides in the secreted. In terms of biological role, receptor for persephin (PSPN), a growth factor that exhibits neurotrophic activity on mesencephalic dopaminergic and motor neurons. Acts by binding to its coreceptor, GFRA4, leading to autophosphorylation and activation of the RET receptor. May be important in C-cell development and, in the postnatal development of the adrenal medulla. The chain is GDNF family receptor alpha-4 (Gfra4) from Rattus norvegicus (Rat).